Reading from the N-terminus, the 424-residue chain is Tyrosine--tRNA ligase (424 aa).

Y37 serves as a coordination point for L-tyrosine. The 'HIGH' region signature appears at 42–51 (PTADSLHLGH). Position 144 is an N6-acetyllysine (K144). Residues Y175 and Q179 each contribute to the L-tyrosine site. A 'KMSKS' region motif is present at residues 235-239 (KFGKT). An ATP-binding site is contributed by K238. Positions 357–414 (ADLMQALVDSELQPSRGQARKTIASNAITINGEKQSDPEYFFKEEDRLFGRFTLLRRG) constitute an S4 RNA-binding domain.

Belongs to the class-I aminoacyl-tRNA synthetase family. TyrS type 1 subfamily. Homodimer.

The protein resides in the cytoplasm. The enzyme catalyses tRNA(Tyr) + L-tyrosine + ATP = L-tyrosyl-tRNA(Tyr) + AMP + diphosphate + H(+). Functionally, catalyzes the attachment of tyrosine to tRNA(Tyr) in a two-step reaction: tyrosine is first activated by ATP to form Tyr-AMP and then transferred to the acceptor end of tRNA(Tyr). In Escherichia coli O127:H6 (strain E2348/69 / EPEC), this protein is Tyrosine--tRNA ligase.